A 286-amino-acid polypeptide reads, in one-letter code: Putative movement protein 3 (286 aa).

This sequence belongs to the nucleorhabdovirus type-1 movement protein family.

Transports viral genome to neighboring plant cells directly through plasmosdesmata, without any budding. The movement protein allows efficient cell to cell propagation, by bypassing the host cell wall barrier. In Rottboellia (Sorghum), this protein is Putative movement protein 3 (3).